The chain runs to 259 residues: Type III pantothenate kinase (259 aa).

9–16 (DAGNSRIK) contacts ATP. Substrate contacts are provided by residues tyrosine 93 and 100–103 (GSDR). Residue aspartate 102 is the Proton acceptor of the active site. Threonine 126 serves as a coordination point for ATP. Threonine 190 lines the substrate pocket.

This sequence belongs to the type III pantothenate kinase family. In terms of assembly, homodimer. Requires NH4(+) as cofactor. K(+) is required as a cofactor.

The protein localises to the cytoplasm. It catalyses the reaction (R)-pantothenate + ATP = (R)-4'-phosphopantothenate + ADP + H(+). It participates in cofactor biosynthesis; coenzyme A biosynthesis; CoA from (R)-pantothenate: step 1/5. Functionally, catalyzes the phosphorylation of pantothenate (Pan), the first step in CoA biosynthesis. The protein is Type III pantothenate kinase of Burkholderia thailandensis (strain ATCC 700388 / DSM 13276 / CCUG 48851 / CIP 106301 / E264).